Consider the following 152-residue polypeptide: Snaclec coagulation factor IX/factor X-binding protein subunit A (152 aa).

Residues 1-23 (MGRFIFMSFGLLVVAASLRGTGA) form the signal peptide. Positions 24-152 (DCLSGWSSYE…GQQNPFVCEA (129 aa)) constitute a C-type lectin domain. Cystine bridges form between cysteine 25–cysteine 36, cysteine 53–cysteine 150, and cysteine 125–cysteine 142. 3 residues coordinate Ca(2+): serine 64, glutamate 66, and glutamate 70. Glutamate 151 lines the Ca(2+) pocket.

This sequence belongs to the snaclec family. In terms of assembly, heterodimer of subunits A and B; disulfide-linked. In terms of tissue distribution, expressed by the venom gland.

The protein resides in the secreted. Its function is as follows. Anticoagulant protein which binds to the gamma-carboxyglutamic acid-domain regions of factors IX (F9) and factor X (F10) in the presence of calcium with a 1 to 1 stoichiometry. The chain is Snaclec coagulation factor IX/factor X-binding protein subunit A from Protobothrops flavoviridis (Habu).